The sequence spans 347 residues: S-adenosylmethionine:tRNA ribosyltransferase-isomerase (347 aa).

The protein belongs to the QueA family. Monomer.

The protein resides in the cytoplasm. It carries out the reaction 7-aminomethyl-7-carbaguanosine(34) in tRNA + S-adenosyl-L-methionine = epoxyqueuosine(34) in tRNA + adenine + L-methionine + 2 H(+). The protein operates within tRNA modification; tRNA-queuosine biosynthesis. In terms of biological role, transfers and isomerizes the ribose moiety from AdoMet to the 7-aminomethyl group of 7-deazaguanine (preQ1-tRNA) to give epoxyqueuosine (oQ-tRNA). This chain is S-adenosylmethionine:tRNA ribosyltransferase-isomerase, found in Ectopseudomonas mendocina (strain ymp) (Pseudomonas mendocina).